A 499-amino-acid chain; its full sequence is Endoglucanase (499 aa).

The N-terminal stretch at 1–29 is a signal peptide; sequence MKRSISIFITCLLIAVLTMGGLLPSPASA. Substrate-binding positions include histidine 65, 69-70, tyrosine 96, and histidine 131; that span reads WY. The Proton donor role is filled by glutamate 169. Substrate is bound at residue tyrosine 231. The active-site Nucleophile is glutamate 257. Substrate is bound by residues 263–264, tryptophan 291, and 296–298; these read AS and KQE. Basic and acidic residues predominate over residues 330–340; the sequence is RGTKDSTKDVP. The disordered stretch occupies residues 330 to 353; that stretch reads RGTKDSTKDVPETPAQDNPTQEKG. Residues 350 to 499 enclose the CBM3 domain; that stretch reads QEKGVSVQYK…GKLIWGTEPN (150 aa).

Belongs to the glycosyl hydrolase 5 (cellulase A) family.

The enzyme catalyses Endohydrolysis of (1-&gt;4)-beta-D-glucosidic linkages in cellulose, lichenin and cereal beta-D-glucans.. This chain is Endoglucanase (bglC), found in Bacillus subtilis.